We begin with the raw amino-acid sequence, 64 residues long: MYATVTVTVLLLISSGIFCQNEKLCSNGGTECNRHCGQNNTVGICHGQNGKLKCECVEYKRKMF.

An N-terminal signal peptide occupies residues M1–C19. 3 disulfides stabilise this stretch: C25–C45, C32–C54, and C36–C56.

Expressed by the venom gland.

It is found in the secreted. The chain is Putative neurotoxin-H from Lychas mucronatus (Chinese swimming scorpion).